We begin with the raw amino-acid sequence, 215 residues long: Sodium channel regulatory subunit beta-3 (215 aa).

An N-terminal signal peptide occupies residues 1–22 (MPAFNRLFPLASLVLIYWVSVC). The Extracellular segment spans residues 23–156 (FPVCVEVPSE…EEAGEDFTSV (134 aa)). 2 disulfide bridges follow: C26–C48 and C45–C120. The 123-residue stretch at 32-154 (ETEAVQGNPM…VTEEAGEDFT (123 aa)) folds into the Ig-like C2-type domain. Residues N95, N109, N113, and N121 are each glycosylated (N-linked (GlcNAc...) asparagine). A helical membrane pass occupies residues 157-178 (VSEIMMYILLVFLTLWLLIEMI). Residues 179–215 (YCYRKVSKAEEAAQENASDYLAIPSENKENSAVPVEE) are Cytoplasmic-facing.

This sequence belongs to the sodium channel auxiliary subunit SCN3B (TC 8.A.17) family. As to quaternary structure, a voltage-gated sodium (Nav) channel consists of an ion-conducting pore-forming alpha subunit functional on its own that is regulated by one or more beta subunits. Forms homodimers and homotrimers. SCN3B is non-covalently associated with alpha subunits and induces the formation of alpha subunit oligomers, including trimers. Interacts with SCN5A/Nav1.5; regulatory subunit of SCN5A/Nav1.5. Interacts with SCN7A/Nav2.1; probable regulatory subunit of SCN7A/Nav2.1. Interacts with SCN10A; regulatory subunit of SCN10A/Nav1.8. Interacts with NFASC; probably involved in targeting the sodium channels to the nodes of Ranvier. Post-translationally, intramolecular disulfide bonds favor the voltage-gated sodium channel oligomeric complex assembly. In terms of processing, N-glycosylated. As to expression, expressed in the atrium.

The protein resides in the cell membrane. Functionally, regulatory subunit of multiple voltage-gated sodium (Nav) channels directly mediating the depolarization of excitable membranes. Navs, also called VGSCs (voltage-gated sodium channels) or VDSCs (voltage-dependent sodium channels), operate by switching between closed and open conformations depending on the voltage difference across the membrane. In the open conformation they allow Na(+) ions to selectively pass through the pore, along their electrochemical gradient. The influx of Na+ ions provokes membrane depolarization, initiating the propagation of electrical signals throughout cells and tissues. The accessory beta subunits participate in localization and functional modulation of the Nav channels. Modulates the activity of SCN2A/Nav1.2, causing a hyperpolarizing shift in the voltage-dependence of inactivation of the channel and increasing the fraction of channels operating in the fast gating mode. Modulates the activity of SCN5A/Nav1.5. Could also regulate the atypical sodium channel SCN7A/Nav2.1. Modulates the activity of SCN10A/Nav1.8, regulating its oligomerization and accelerating the recovery from inactivation. The sequence is that of Sodium channel regulatory subunit beta-3 from Homo sapiens (Human).